Consider the following 161-residue polypeptide: Type II secretion system protein M (161 aa).

At M1 to R16 the chain is on the cytoplasmic side. Residues C17–W36 traverse the membrane as a helical segment. Topologically, residues Q37–K161 are periplasmic.

It belongs to the GSP M family. Type II secretion system is composed of four main components: the outer membrane complex, the inner membrane complex, the cytoplasmic secretion ATPase and the periplasm-spanning pseudopilus. Forms homodimers. Interacts with PulL/GspL. Interacts with PulE/GspE and PulF/GspF.

It is found in the cell inner membrane. In terms of biological role, inner membrane component of the type II secretion system required for the energy-dependent secretion of extracellular factors such as proteases and toxins from the periplasm. Plays a role in the complex assembly and recruits PulL resulting in a stable complex in the inner membrane. Provides thus a link between the energy-providing PulE protein in the cytoplasm and the rest of the T2SS machinery. The chain is Type II secretion system protein M (pulM) from Klebsiella pneumoniae.